Consider the following 66-residue polypeptide: Large ribosomal subunit protein bL33c (66 aa).

Belongs to the bacterial ribosomal protein bL33 family.

It is found in the plastid. The protein localises to the chloroplast. This chain is Large ribosomal subunit protein bL33c, found in Crucihimalaya wallichii (Rock-cress).